The primary structure comprises 185 residues: Large ribosomal subunit protein uL5 (185 aa).

It belongs to the universal ribosomal protein uL5 family. In terms of assembly, part of the 50S ribosomal subunit; part of the 5S rRNA/L5/L18/L25 subcomplex. Contacts the 5S rRNA and the P site tRNA. Forms a bridge to the 30S subunit in the 70S ribosome.

This is one of the proteins that bind and probably mediate the attachment of the 5S RNA into the large ribosomal subunit, where it forms part of the central protuberance. In the 70S ribosome it contacts protein S13 of the 30S subunit (bridge B1b), connecting the 2 subunits; this bridge is implicated in subunit movement. Contacts the P site tRNA; the 5S rRNA and some of its associated proteins might help stabilize positioning of ribosome-bound tRNAs. The chain is Large ribosomal subunit protein uL5 from Rhizobium etli (strain CIAT 652).